Reading from the N-terminus, the 324-residue chain is IDS-like terpene synthase 2 (324 aa).

Mg(2+)-binding residues include Asp77 and Asp81.

It belongs to the FPP/GGPP synthase family. The cofactor is Mg(2+).

It catalyses the reaction (2E)-geranyl diphosphate = (E)-beta-ocimene + diphosphate. The enzyme catalyses (2E,6E)-farnesyl diphosphate = (3E,6E)-alpha-farnesene + diphosphate. It carries out the reaction (2E,6E,10E)-geranylgeranyl diphosphate = (E,E,E)-alpha-springene + diphosphate. Terpene synthase that shows monoterpene synthase activity and produces (E)-beta-ocimene as a major product, using geranyl diphosphate (GPP) as substrate. Also shows sesquiterpene synthase activity as it is able to convert farnesyl diphosphate (FPP) into (E,E)-alpha-farnesene. Finally, TPS2 can convert geranylgeranyl diphosphate into (E,E,E)-alpha-springene. This Melampsora lini (Rust fungus) protein is IDS-like terpene synthase 2.